The sequence spans 382 residues: Inactive serine protease 54 (382 aa).

A signal peptide spans 1-20 (MAELRGILLLLLYMSHSSSA). A Peptidase S1 domain is found at 29-258 (IVDQLHENLV…YSNWIIAKTR (230 aa)). A glycan (N-linked (GlcNAc...) asparagine) is linked at N113. 3 disulfides stabilise this stretch: C154-C216, C185-C195, and C206-C237.

It belongs to the peptidase S1 family. Plasma kallikrein subfamily.

The protein localises to the secreted. This Rattus norvegicus (Rat) protein is Inactive serine protease 54 (Prss54).